The chain runs to 381 residues: tRNA-specific 2-thiouridylase MnmA (381 aa).

ATP contacts are provided by residues 9 to 16 and Met-35; that span reads GMSGGVDS. Positions 95 to 97 are interaction with target base in tRNA; it reads NPD. Residue Cys-100 is the Nucleophile of the active site. Cys-100 and Cys-196 form a disulfide bridge. Gly-124 contacts ATP. Residues 146 to 148 form an interaction with tRNA region; that stretch reads KDQ. The active-site Cysteine persulfide intermediate is the Cys-196. The segment at 308–309 is interaction with tRNA; the sequence is RY.

The protein belongs to the MnmA/TRMU family.

The protein localises to the cytoplasm. It carries out the reaction S-sulfanyl-L-cysteinyl-[protein] + uridine(34) in tRNA + AH2 + ATP = 2-thiouridine(34) in tRNA + L-cysteinyl-[protein] + A + AMP + diphosphate + H(+). In terms of biological role, catalyzes the 2-thiolation of uridine at the wobble position (U34) of tRNA, leading to the formation of s(2)U34. The chain is tRNA-specific 2-thiouridylase MnmA from Burkholderia multivorans (strain ATCC 17616 / 249).